The sequence spans 654 residues: MLTPRDENNEGDAMPMLKKPRYSSLSGQSTNITYQEHTISREERAAAVGRHEGFRGCTIWFTGLSGAGKTTISFALERTLNKLGIPCYGLDGDNIRHGLCKNLGFSKEDRQENIRRVAEVAKLFADSGMICLAAFISPFQEDRLDARKIHESENVKFIEVHVSTTLEVCEQRDPKPSELYKKARAGQILGFTGIDSAYEPPENAEIILDAGKDGVQQCVQKVLDHLESKGLLPEQIPDVPAVRELFVSDDLTVAELLKESQNLPTVELTKVDLQWLQVLAEGWATPLSGFMRERQYLQSMHFGQLLDLKHKVAFVGEKSDDKEDSWPMMDDINQSIPIVLPISDDVKKGLEGVTRIALKYNGQVYAILSDPEIFEHRKDERVCRQFGTNDPRHPAVAQVLESGNWLLGGDVAVVQKIQFNDGLDKYRKTPNELRAIFAEKNADAVFAFQLRNPIHNGHALLMRDTREKLLAEHKNPILLLHPLGGWTKDDDVPLDIRIKQHEAVIAERVLDPEWTVLSIFPSPMMYAGPTEVQWHARSRIAAGIQHYIVGRDPAGIQKPGSPDALYETTHGAKVLSMAPGLSALHILPFRVAAYDKTAKKMSFFDTSRKEDFENISGTKMRGLARNGDTPPEGFMAPTAWEVLAGYYKSLQNSN.

A disordered region spans residues 1 to 26; sequence MLTPRDENNEGDAMPMLKKPRYSSLS. The tract at residues 1-231 is adenylyl-sulfate kinase; sequence MLTPRDENNE…VLDHLESKGL (231 aa). Position 66–71 (66–71) interacts with ATP; it reads GAGKTT. Residues 93–96, F105, 110–113, 136–137, K175, and 190–191 contribute to the adenosine 5'-phosphosulfate site; these read DNIR, RQEN, IS, and GF. Residues C218, 449-452, 550-554, and A592 each bind ATP; these read QLRN and GRDPA. Residues 242–653 are sulfate adenylyltransferase; that stretch reads VRELFVSDDL…AGYYKSLQNS (412 aa).

The protein in the N-terminal section; belongs to the APS kinase family. In the C-terminal section; belongs to the sulfate adenylyltransferase family.

It is found in the nucleus. The catalysed reaction is sulfate + ATP + H(+) = adenosine 5'-phosphosulfate + diphosphate. It catalyses the reaction adenosine 5'-phosphosulfate + ATP = 3'-phosphoadenylyl sulfate + ADP + H(+). Its pathway is sulfur metabolism; sulfate assimilation. In terms of biological role, bifunctional enzyme with both ATP sulfurylase and APS kinase activity, which mediates two steps in the sulfate activation pathway. The first step is the transfer of a sulfate group to ATP to yield adenosine 5'-phosphosulfate (APS), and the second step is the transfer of a phosphate group from ATP to APS yielding 3'-phosphoadenylylsulfate (PAPS: activated sulfate donor used by sulfotransferase). Required for normal growth and development. Involved in several aspects of both embryonic and postembryonic development, including molting, changes in cell shape, and patterning of epithelial and muscle cells. The chain is Bifunctional 3'-phosphoadenosine 5'-phosphosulfate synthase pps-1 from Caenorhabditis elegans.